Here is a 359-residue protein sequence, read N- to C-terminus: Peptide chain release factor 1 (359 aa).

Q236 bears the N5-methylglutamine mark.

The protein belongs to the prokaryotic/mitochondrial release factor family. In terms of processing, methylated by PrmC. Methylation increases the termination efficiency of RF1.

The protein localises to the cytoplasm. Functionally, peptide chain release factor 1 directs the termination of translation in response to the peptide chain termination codons UAG and UAA. This Streptococcus pneumoniae serotype 19F (strain G54) protein is Peptide chain release factor 1.